Here is a 421-residue protein sequence, read N- to C-terminus: Serine--tRNA ligase (421 aa).

Residue 231 to 233 (TAE) coordinates L-serine. 262 to 264 (RRE) contacts ATP. Residue E285 coordinates L-serine. 349-352 (EISS) contributes to the ATP binding site. S384 provides a ligand contact to L-serine.

The protein belongs to the class-II aminoacyl-tRNA synthetase family. Type-1 seryl-tRNA synthetase subfamily. In terms of assembly, homodimer. The tRNA molecule binds across the dimer.

The protein resides in the cytoplasm. It carries out the reaction tRNA(Ser) + L-serine + ATP = L-seryl-tRNA(Ser) + AMP + diphosphate + H(+). The enzyme catalyses tRNA(Sec) + L-serine + ATP = L-seryl-tRNA(Sec) + AMP + diphosphate + H(+). It participates in aminoacyl-tRNA biosynthesis; selenocysteinyl-tRNA(Sec) biosynthesis; L-seryl-tRNA(Sec) from L-serine and tRNA(Sec): step 1/1. Functionally, catalyzes the attachment of serine to tRNA(Ser). Is also able to aminoacylate tRNA(Sec) with serine, to form the misacylated tRNA L-seryl-tRNA(Sec), which will be further converted into selenocysteinyl-tRNA(Sec). This is Serine--tRNA ligase from Hydrogenobaculum sp. (strain Y04AAS1).